Here is a 1717-residue protein sequence, read N- to C-terminus: DNA-directed RNA polymerase I subunit RPA1 (1717 aa).

Residues C64, C67, C74, H77, C104, and C107 each coordinate Zn(2+). The segment at 110 to 201 (LTCPRAAIYL…VAQFWKTHMA (92 aa)) is clamp. Positions 205 and 208 each coordinate Zn(2+). Positions 327 to 433 (FTNGQTVNLQ…IRQILEKKEG (107 aa)) are clamp. Residues 410–423 (DSEMDKLMLEKYPG) are rudder. DNA contacts are provided by K431, R436, and R443. The involved in RRN3 binding to Pol I complex stretch occupies residues 475–549 (YPQPVTPWNV…QGTKVVCRHV (75 aa)). Residue R559 participates in RNA binding. 3 residues coordinate Mg(2+): D595, D597, and D599. Residue D599 participates in RNA binding. A funnel region spans residues 812 to 890 (KPNADVVRQR…NEINKACMPL (79 aa)). A bridging helix region spans residues 967–1008 (RPPEFFFHCMAGREGLVDTAVKTSRSGYLQRCIIKHLEGLVI). Positions 1067–1162 (ADPQKVLGHI…SLSVWRPDIY (96 aa)) are mediates the interaction with TOP2A. Residues 1214–1255 (PGEAVGLLAAQSIGEPSTQMTLNTFHFAGRGEMNVTLGIPRL) are trigger loop. R1256 serves as a coordination point for DNA. The interval 1372-1493 (RNVNSRRATQ…RRHSRPQGAE (122 aa)) is disordered. Residues 1380–1397 (TQKDLNDTEDSGRSQREE) are compositionally biased toward basic and acidic residues. Residue S1393 is modified to Phosphoserine. Composition is skewed to acidic residues over residues 1398-1419 (ERDEEEEGNIVDAEAEEGDADA) and 1429-1450 (EEEVDYESEEEGEEEEEEEVQE). Positions 1452 to 1464 (GNIKGDGVHQGHE) are enriched in basic and acidic residues. The span at 1465 to 1477 (PDEEEHLGLEEEE) shows a compositional bias: acidic residues.

It belongs to the RNA polymerase beta' chain family. Component of the RNA polymerase I (Pol I) complex consisting of 13 subunits: a ten-subunit catalytic core composed of POLR1A/RPA1, POLR1B/RPA2, POLR1C/RPAC1, POLR1D/RPAC2, POLR1H/RPA12, POLR2E/RPABC1, POLR2F/RPABC2, POLR2H/RPABC3, POLR2K/RPABC4 and POLR2L/RPABC5; a mobile stalk subunit POLR1F/RPA43 protruding from the core and additional subunits homologous to general transcription factors POLR1E/RPA49 and POLR1G/RPA34. Part of Pol I pre-initiation complex (PIC), in which Pol I core assembles with RRN3 and promoter-bound UTBF and SL1/TIF-IB complex. Interacts (via dock II domain) with TOP2A; this interaction may assist Pol I transcription initiation by releasing supercoils occurring during DNA unwinding. Interacts with CAVIN1; this interaction induces the dissociation of Pol I complex paused at rDNA terminator sequences. Interacts with MYO1C. Interacts with ERBB2. Interacts with DDX11. Interacts with RECQL5. It depends on Mg(2+) as a cofactor. Phosphorylated.

The protein resides in the nucleus. It is found in the nucleolus. The protein localises to the chromosome. It catalyses the reaction RNA(n) + a ribonucleoside 5'-triphosphate = RNA(n+1) + diphosphate. Catalytic core component of RNA polymerase I (Pol I), a DNA-dependent RNA polymerase which synthesizes ribosomal RNA precursors using the four ribonucleoside triphosphates as substrates. Transcribes 47S pre-rRNAs from multicopy rRNA gene clusters, giving rise to 5.8S, 18S and 28S ribosomal RNAs. Pol I-mediated transcription cycle proceeds through transcription initiation, transcription elongation and transcription termination stages. During transcription initiation, Pol I pre-initiation complex (PIC) is recruited by the selectivity factor 1 (SL1/TIF-IB) complex bound to the core promoter that precedes an rDNA repeat unit. The PIC assembly bends the promoter favoring the formation of the transcription bubble and promoter escape. Once the polymerase has escaped from the promoter it enters the elongation phase during which RNA is actively polymerized, based on complementarity with the template DNA strand. Highly processive, assembles in structures referred to as 'Miller trees' where many elongating Pol I complexes queue and transcribe the same rDNA coding regions. At terminator sequences downstream of the rDNA gene, PTRF interacts with Pol I and halts Pol I transcription leading to the release of the RNA transcript and polymerase from the DNA. Forms Pol I active center together with the second largest subunit POLR1B/RPA2. Appends one nucleotide at a time to the 3' end of the nascent RNA, with POLR1A/RPA1 contributing a Mg(2+)-coordinating DxDGD motif, and POLR1B/RPA2 participating in the coordination of a second Mg(2+) ion and providing lysine residues believed to facilitate Watson-Crick base pairing between the incoming nucleotide and the template base. Typically, Mg(2+) ions direct a 5' nucleoside triphosphate to form a phosphodiester bond with the 3' hydroxyl of the preceding nucleotide of the nascent RNA, with the elimination of pyrophosphate. Has proofreading activity: Pauses and backtracks to allow the cleavage of a missincorporated nucleotide via POLR1H/RPA12. High Pol I processivity is associated with decreased transcription fidelity. The sequence is that of DNA-directed RNA polymerase I subunit RPA1 from Mus musculus (Mouse).